Consider the following 557-residue polypeptide: 2-succinyl-5-enolpyruvyl-6-hydroxy-3-cyclohexene-1-carboxylate synthase (557 aa).

The protein belongs to the TPP enzyme family. MenD subfamily. In terms of assembly, homodimer. Mg(2+) is required as a cofactor. Requires Mn(2+) as cofactor. Thiamine diphosphate serves as cofactor.

It carries out the reaction isochorismate + 2-oxoglutarate + H(+) = 5-enolpyruvoyl-6-hydroxy-2-succinyl-cyclohex-3-ene-1-carboxylate + CO2. It functions in the pathway quinol/quinone metabolism; 1,4-dihydroxy-2-naphthoate biosynthesis; 1,4-dihydroxy-2-naphthoate from chorismate: step 2/7. It participates in quinol/quinone metabolism; menaquinone biosynthesis. Catalyzes the thiamine diphosphate-dependent decarboxylation of 2-oxoglutarate and the subsequent addition of the resulting succinic semialdehyde-thiamine pyrophosphate anion to isochorismate to yield 2-succinyl-5-enolpyruvyl-6-hydroxy-3-cyclohexene-1-carboxylate (SEPHCHC). The protein is 2-succinyl-5-enolpyruvyl-6-hydroxy-3-cyclohexene-1-carboxylate synthase of Yersinia enterocolitica serotype O:8 / biotype 1B (strain NCTC 13174 / 8081).